The following is a 496-amino-acid chain: RNA-binding motif protein, Y chromosome, family 1 member D (496 aa).

Residues 8–85 (GKLFIGGLNR…KAIKVEQAKK (78 aa)) enclose the RRM domain. Disordered stretches follow at residues 67–349 (DMNG…HRDY) and 452–496 (KDQR…SSRY). Low complexity-rich tracts occupy residues 97–114 (PASS…SARG) and 149–159 (PVKRGPSSRSG). The span at 175–184 (NSWMGSQGPM) shows a compositional bias: polar residues. Basic and acidic residues-rich tracts occupy residues 204-214 (RNDRMSTRHDG), 242-253 (DNGHSNRDEHSS), 276-289 (AYRD…DESY), 313-326 (GYRD…HESY), 335-349 (SSRE…HRDY), and 484-496 (GESR…SSRY).

Interacts with splicing factor proteins SFRS3/SRP20, TRA2B/SFRS10, KHDRBS1/SAM68 and KHDRBS3. Testis-specific.

It is found in the nucleus. Its function is as follows. RNA-binding protein which may be involved in spermatogenesis. Required for sperm development, possibly by participating in pre-mRNA splicing in the testis. This Homo sapiens (Human) protein is RNA-binding motif protein, Y chromosome, family 1 member D (RBMY1D).